Here is a 101-residue protein sequence, read N- to C-terminus: Urease subunit beta (101 aa).

The protein belongs to the urease beta subunit family. Heterotrimer of UreA (gamma), UreB (beta) and UreC (alpha) subunits. Three heterotrimers associate to form the active enzyme.

The protein localises to the cytoplasm. It catalyses the reaction urea + 2 H2O + H(+) = hydrogencarbonate + 2 NH4(+). The protein operates within nitrogen metabolism; urea degradation; CO(2) and NH(3) from urea (urease route): step 1/1. This Burkholderia multivorans (strain ATCC 17616 / 249) protein is Urease subunit beta.